We begin with the raw amino-acid sequence, 325 residues long: Heat-inducible transcription repressor HrcA (325 aa).

It belongs to the HrcA family.

Its function is as follows. Negative regulator of class I heat shock genes (grpE-dnaK-dnaJ and groELS operons). Prevents heat-shock induction of these operons. The sequence is that of Heat-inducible transcription repressor HrcA from Staphylococcus haemolyticus (strain JCSC1435).